Consider the following 366-residue polypeptide: Carbamoyl phosphate synthase small chain (366 aa).

Residues 1 to 171 (MQSKRYLVLE…KTPYVSTGKD (171 aa)) form a CPSase region. L-glutamine is bound by residues S47, G221, and G223. A Glutamine amidotransferase type-1 domain is found at 173–360 (SVVLVDFGKK…VAMMTNFKEK (188 aa)). C248 functions as the Nucleophile in the catalytic mechanism. Residues L249, Q252, N290, G292, and Y293 each coordinate L-glutamine. Residues H333 and E335 contribute to the active site.

This sequence belongs to the CarA family. Composed of two chains; the small (or glutamine) chain promotes the hydrolysis of glutamine to ammonia, which is used by the large (or ammonia) chain to synthesize carbamoyl phosphate. Tetramer of heterodimers (alpha,beta)4.

The catalysed reaction is hydrogencarbonate + L-glutamine + 2 ATP + H2O = carbamoyl phosphate + L-glutamate + 2 ADP + phosphate + 2 H(+). It carries out the reaction L-glutamine + H2O = L-glutamate + NH4(+). Its pathway is amino-acid biosynthesis; L-arginine biosynthesis; carbamoyl phosphate from bicarbonate: step 1/1. It functions in the pathway pyrimidine metabolism; UMP biosynthesis via de novo pathway; (S)-dihydroorotate from bicarbonate: step 1/3. Its function is as follows. Small subunit of the glutamine-dependent carbamoyl phosphate synthetase (CPSase). CPSase catalyzes the formation of carbamoyl phosphate from the ammonia moiety of glutamine, carbonate, and phosphate donated by ATP, constituting the first step of 2 biosynthetic pathways, one leading to arginine and/or urea and the other to pyrimidine nucleotides. The small subunit (glutamine amidotransferase) binds and cleaves glutamine to supply the large subunit with the substrate ammonia. This is Carbamoyl phosphate synthase small chain from Staphylococcus aureus (strain COL).